A 209-amino-acid polypeptide reads, in one-letter code: Imidazole glycerol phosphate synthase subunit HisH (209 aa).

The region spanning methionine 1–serine 205 is the Glutamine amidotransferase type-1 domain. The active-site Nucleophile is cysteine 79. Active-site residues include histidine 180 and glutamate 182.

In terms of assembly, heterodimer of HisH and HisF.

The protein localises to the cytoplasm. The catalysed reaction is 5-[(5-phospho-1-deoxy-D-ribulos-1-ylimino)methylamino]-1-(5-phospho-beta-D-ribosyl)imidazole-4-carboxamide + L-glutamine = D-erythro-1-(imidazol-4-yl)glycerol 3-phosphate + 5-amino-1-(5-phospho-beta-D-ribosyl)imidazole-4-carboxamide + L-glutamate + H(+). It catalyses the reaction L-glutamine + H2O = L-glutamate + NH4(+). Its pathway is amino-acid biosynthesis; L-histidine biosynthesis; L-histidine from 5-phospho-alpha-D-ribose 1-diphosphate: step 5/9. Its function is as follows. IGPS catalyzes the conversion of PRFAR and glutamine to IGP, AICAR and glutamate. The HisH subunit catalyzes the hydrolysis of glutamine to glutamate and ammonia as part of the synthesis of IGP and AICAR. The resulting ammonia molecule is channeled to the active site of HisF. The polypeptide is Imidazole glycerol phosphate synthase subunit HisH (Bacillus cereus (strain G9842)).